The sequence spans 272 residues: Alpha-tubulin N-acetyltransferase (272 aa).

The N-acetyltransferase domain maps to 1-186 (MEFRFNCHPL…NNFVVYEGFF (186 aa)). Acetyl-CoA-binding positions include 120 to 133 (FYVH…GLGR) and 156 to 165 (SEKLLGFLQK). Residues 216–244 (TTVGEQRRSSSQTRQQVVSPPVVQQPPVG) form a disordered region. Over residues 224-244 (SSSQTRQQVVSPPVVQQPPVG) the composition is skewed to low complexity.

This sequence belongs to the acetyltransferase ATAT1 family.

It catalyses the reaction L-lysyl-[alpha-tubulin] + acetyl-CoA = N(6)-acetyl-L-lysyl-[alpha-tubulin] + CoA + H(+). Its function is as follows. Specifically acetylates 'Lys-40' in alpha-tubulin on the lumenal side of microtubules. Promotes microtubule destabilization and accelerates microtubule dynamics; this activity may be independent of acetylation activity. Acetylates alpha-tubulin with a slow enzymatic rate, due to a catalytic site that is not optimized for acetyl transfer. Enters the microtubule through each end and diffuses quickly throughout the lumen of microtubules. Acetylates only long/old microtubules because of its slow acetylation rate since it does not have time to act on dynamically unstable microtubules before the enzyme is released. The protein is Alpha-tubulin N-acetyltransferase of Aedes aegypti (Yellowfever mosquito).